The following is a 165-amino-acid chain: uncharacterized protein (165 aa).

This is an uncharacterized protein from Escherichia coli (strain K12).